The primary structure comprises 106 residues: Pyrimidine/purine nucleoside phosphorylase (106 aa).

This sequence belongs to the nucleoside phosphorylase PpnP family.

The catalysed reaction is a purine D-ribonucleoside + phosphate = a purine nucleobase + alpha-D-ribose 1-phosphate. It catalyses the reaction adenosine + phosphate = alpha-D-ribose 1-phosphate + adenine. It carries out the reaction cytidine + phosphate = cytosine + alpha-D-ribose 1-phosphate. The enzyme catalyses guanosine + phosphate = alpha-D-ribose 1-phosphate + guanine. The catalysed reaction is inosine + phosphate = alpha-D-ribose 1-phosphate + hypoxanthine. It catalyses the reaction thymidine + phosphate = 2-deoxy-alpha-D-ribose 1-phosphate + thymine. It carries out the reaction uridine + phosphate = alpha-D-ribose 1-phosphate + uracil. The enzyme catalyses xanthosine + phosphate = alpha-D-ribose 1-phosphate + xanthine. Its function is as follows. Catalyzes the phosphorolysis of diverse nucleosides, yielding D-ribose 1-phosphate and the respective free bases. Can use uridine, adenosine, guanosine, cytidine, thymidine, inosine and xanthosine as substrates. Also catalyzes the reverse reactions. In Burkholderia ambifaria (strain MC40-6), this protein is Pyrimidine/purine nucleoside phosphorylase.